The primary structure comprises 359 residues: MTNLPSHHTAIVGSEDGSLKVAEQVPLPRLENDMILVRNTAVALNPIDGKMVGNLASVGAVAGMDYVGTVVGIGPKVKTASEIQLGDRVCGAVQGMHSLTPSVGAFAQFVGATDIVTLKVPPSMTVEDAATLGSGVGTIGLALFRSLDVPGYPEAPATERIPVLVYGGSTATGTLAIQLLKLSGLIPITTCSPHNFDLVKSFGAEAVFDYRRPETPDEIRKFTRNSLKYVLDCISEPETMQFCYKCIGRTGGKYTALEPFPQFLHTRPTIQPDWVLGPTLLGKPIGWGPPFERVGDPDVREFAIKWFATAQRLLDQGKLQTHPVKLMEGGFEGILCGLEMLKKKQVSGQKLVYMIPQVA.

47–50 (IDGK) lines the NADP(+) pocket. 134–141 (SGVGTIGL) contributes to the substrate binding site. Residues 169–172 (STAT), 192–195 (SPHN), tyrosine 210, and 257–258 (LE) each bind NADP(+). A substrate-binding site is contributed by 277 to 281 (GPTLL). Residue 346 to 347 (VS) coordinates NADP(+).

This sequence belongs to the zinc-containing alcohol dehydrogenase family. In terms of assembly, monomer.

The protein operates within secondary metabolite biosynthesis. In terms of biological role, trans-enoyl reductase; part of the gene cluster that mediates the biosynthesis of fusarielins F, G and H, decaketide compounds with 5 methylations and a decaline core that act as mycoestrogens as they stimulate growth of MCF-7 breast cancer cells. The initial compound in the pathway is produced by the reducing polyketide synthase FSL1. FSL1 lacks an active enoyl reductase (ER) domain and biosynthesis of fusarielins relies on the trans-acting enoyl reductase FSL5, before it is released through hydrolysis catalyzed by the thioesterase FSL2. Fusarielins F, G, and H have a C11=C12 cis double bond and is fully reduced between C10 and C11 and between C12 and C13. FSL3 can be involved in the formation of the C11=C12 cis double bond by moving a hypothetical C10=C11 or C12=C13 trans double bond to form prefusarielin. Prefusarielin is oxygenated at C15 and C16 by the cytochrome P450 monooxygenase FSL4, resulting in fusarielin F, which subsequently is epoxidized into fusarielin G by the same enzyme. The final step in the pathway is a reduction of the carboxylic acid moiety to yield fusarielin H via a still undetermined mechanism. This is Trans-enoyl reductase FSL5 from Gibberella zeae (strain ATCC MYA-4620 / CBS 123657 / FGSC 9075 / NRRL 31084 / PH-1) (Wheat head blight fungus).